A 382-amino-acid chain; its full sequence is MSLKEKTQSLFANAFGYPATHTIQAPGRVNLIGEHTDYNDGFVLPCAIDYQTVISCAPRDDRKVRVMAADYENQLDEFSLDAPIVAHENYQWANYVRGVVKHLQLRNNSFGGVDMVISGNVPQGAGLSSSASLEVAVGTVLQQLYHLPLDGAQIALNGQEAENQFVGCNCGIMDQLISALGKKDHALLIDCRSLGTKAVSMPKGVAVVIINSNFKRTLVGSEYNTRREQCETGARFFQQPALRDVTIEEFNAVAHELDPIVAKRVRHILTENARTVEAASALEQGDLKRMSELMAESHASMRDDFEITVPQIDTLVEIVKAVIGDKGGVRMTGGGFGGCIVALIPEELVPAVQQAVAEQYEAKTGIKETFYVCKPSQGAGQC.

34 to 37 (EHTD) contributes to the substrate binding site. Position 124-130 (124-130 (GAGLSSS)) interacts with ATP. Mg(2+) contacts are provided by Ser130 and Glu162. The active-site Proton acceptor is Asp174. Tyr223 contributes to the substrate binding site.

This sequence belongs to the GHMP kinase family. GalK subfamily.

The protein localises to the cytoplasm. It carries out the reaction alpha-D-galactose + ATP = alpha-D-galactose 1-phosphate + ADP + H(+). The protein operates within carbohydrate metabolism; galactose metabolism. Catalyzes the transfer of the gamma-phosphate of ATP to D-galactose to form alpha-D-galactose-1-phosphate (Gal-1-P). The chain is Galactokinase from Escherichia coli O9:H4 (strain HS).